Here is a 171-residue protein sequence, read N- to C-terminus: uncharacterized protein (171 aa).

The tract at residues 139 to 171 is disordered; sequence ARKPTKSDDEEEEVGKMGGISSSINSWVQRQKL. Residues 158–171 show a composition bias toward polar residues; that stretch reads ISSSINSWVQRQKL.

This is an uncharacterized protein from Caenorhabditis elegans.